Here is a 545-residue protein sequence, read N- to C-terminus: Thermosome subunit beta (545 aa).

The protein belongs to the TCP-1 chaperonin family. As to quaternary structure, forms a Heterooligomeric complex of two stacked eight-membered rings.

Its function is as follows. Molecular chaperone; binds unfolded polypeptides in vitro, and has a weak ATPase activity. The polypeptide is Thermosome subunit beta (thsB) (Thermococcus sp. (strain KS-8)).